The sequence spans 196 residues: ECF RNA polymerase sigma factor SigM (196 aa).

The tract at residues Leu-39 to Lys-105 is sigma-70 factor domain-2. Positions Asp-63–Gln-66 match the Polymerase core binding motif. The segment at Ala-130–Leu-181 is sigma-70 factor domain-4. Residues Ile-156 to Ala-175 constitute a DNA-binding region (H-T-H motif).

The protein belongs to the sigma-70 factor family. ECF subfamily. Interacts transiently with the RNA polymerase catalytic core formed by RpoA, RpoB, RpoC and RpoZ (2 alpha, 1 beta, 1 beta' and 1 omega subunit) to form the RNA polymerase holoenzyme that can initiate transcription. Interacts (via sigma-70 factor domain-4) with anti-sigma-M factor RsmA (AC L7N5D7).

In terms of biological role, sigma factors are initiation factors that promote the attachment of RNA polymerase to specific initiation sites and are then released. Extracytoplasmic function (ECF) sigma factors are held in an inactive form by an anti-sigma factor (RsaM, AC L7N5D7) until released by regulated intramembrane proteolysis. This sigma factor is required for the synthesis of surface or secreted molecules. The polypeptide is ECF RNA polymerase sigma factor SigM (sigM) (Mycobacterium tuberculosis (strain ATCC 25618 / H37Rv)).